Reading from the N-terminus, the 797-residue chain is Plakophilin-3 (797 aa).

Positions 58 to 81 (GQQSRHNGSAELDGSAESARGMPR) are disordered. The residue at position 81 (Arg-81) is an Omega-N-methylarginine. Phosphoserine is present on residues Ser-123, Ser-180, and Ser-183. Tyr-195 is modified (phosphotyrosine). Positions 219–228 (ASSGSSRAGG) are enriched in low complexity. Residues 219-241 (ASSGSSRAGGLDWPEATEGPPSR) form a disordered region. At Ser-240 the chain carries Phosphoserine. The residue at position 250 (Thr-250) is a Phosphothreonine. The segment at 253–274 (RFQSSHRSRGGTGSVSGAGLEP) is disordered. Arg-261 bears the Omega-N-methylarginine mark. The interval 283–288 (SLSLSL) is required for interaction with SFN. Phosphoserine is present on residues Ser-285, Ser-313, Ser-314, and Ser-331. The interval 294 to 724 (LPDVRGLDSY…AEVLVNIIAV (431 aa)) is required for interaction with GSK3B. ARM repeat units follow at residues 305 to 348 (GHRT…HRCY), 351 to 390 (AAAK…NLIY), 393 to 432 (VDNK…NLSS), 449 to 487 (TDLV…NLSS), 491 to 536 (ATRQ…NLSY), 596 to 637 (PKGL…NITA), 645 to 684 (VLSR…NLSR), and 689 to 730 (KDEM…NLVV). Residues 516 to 797 (VGKCEDKSVE…GYRKEDFLGP (282 aa)) are required for binding to PKP2 mRNA.

The protein belongs to the beta-catenin family. In terms of assembly, found in a complex composed of CDH1, RAP1A and PKP3; PKP3 acts as a scaffold protein within the complex, the complex is required for CDH1 localization to mature desmosome cell junctions. Interacts with FXR1; the interaction facilitates the binding of PKP3 to PKP2 mRNA. Interacts (via ARM repeats) with GSK3B; the interaction may be involved in PKP3 protein degradation. Interacts with hyperphosphorylated and hypophosphorylated RB1; the interaction inhibits RB1 interaction with and repression of the transcription factor E2F1, potentially via sequestering RB1 to the cytoplasm. Interacts with CDKN1A; the interaction sequesters CDKN1A to the cytoplasm thereby repressing its role as an inhibitor of CDK4- and CDK6-driven RB1 phosphorylation. Interacts (via N-terminus) with SFN; the interaction maintains the cytoplasmic pool of PKP3, facilitates PKP3 exchange at desmosomes and restricts PKP3 localization to existing desmosome cell junctions. Interacts (via N-terminus) with JUP; the interaction is required for PKP3 localization to desmosome cell-cell junctions. Phosphorylated at Ser-285 when localized to the cytoplasm, PKP3 at desmosome cell junctions is not phosphorylated. Phosphorylation at Try-195 by SRC is induced by reactive oxygen species and potentially acts as a release mechanism from desmosome cell-cell junctions. Expressed in all layers of the epidermis, but is most abundant in the basal layer (at protein level). Expressed in keratinocytes of the epidermis at birth (at protein level). Expressed in the anagen non-keratinized inner root sheath cuticle and hair cuticle (at protein level). Also expressed in the matrix, precursors of the inner root sheath and hair shaft lineages (at protein level). Expressed at apical membranes in the outer hair root sheath and basal layer keratinocytes (at protein level). Expressed in intestinal epithelial cells and lamina propria of the ileum (at protein level). Expressed in keratinocytes (at protein level).

The protein localises to the nucleus. The protein resides in the cell junction. It is found in the desmosome. Its subcellular location is the cytoplasm. It localises to the cell membrane. The protein localises to the adherens junction. A component of desmosome cell-cell junctions which are required for positive regulation of cellular adhesion. Required for the localization of DSG2, DSP and PKP2 to mature desmosome junctions. May also play a role in the maintenance of DSG3 protein abundance in keratinocytes. Required for the formation of DSP-containing desmosome precursors in the cytoplasm during desmosome assembly. Also regulates the accumulation of CDH1 to mature desmosome junctions, via cAMP-dependent signaling and its interaction with activated RAP1A. Positively regulates the stabilization of PKP2 mRNA and therefore protein abundance, via its interaction with FXR1, may also regulate the protein abundance of DSP via the same mechanism. May also regulate the protein abundance of the desmosome component PKP1. Required for the organization of desmosome junctions at intercellular borders between basal keratinocytes of the epidermis, as a result plays a role in maintenance of the dermal barrier and regulation of the dermal inflammatory response. Required during epidermal keratinocyte differentiation for cell adherence at tricellular cell-cell contacts, via regulation of the timely formation of adherens junctions and desmosomes in a calcium-dependent manner, and may also play a role in the organization of the intracellular actin fiber belt. Acts as a negative regulator of the inflammatory response in hematopoietic cells of the skin and intestine, via modulation of proinflammatory cytokine production. Important for epithelial barrier maintenance in the intestine to reduce intestinal permeability, thereby plays a role in protection from intestinal-derived endotoxemia. Required for the development of hair follicles, via a role in the regulation of inner root sheaf length, correct alignment and anterior-posterior polarity of hair follicles. Promotes proliferation and cell-cycle G1/S phase transition of keratinocytes. Promotes E2F1-driven transcription of G1/S phase promoting genes by acting to release E2F1 from its inhibitory interaction with RB1, via sequestering RB1 and CDKN1A to the cytoplasm and thereby increasing CDK4- and CDK6-driven phosphorylation of RB1. May act as a scaffold protein to facilitate MAPK phosphorylation of RPS6KA protein family members and subsequently promote downstream EGFR signaling. May play a role in the positive regulation of transcription of Wnt-mediated TCF-responsive target genes. This chain is Plakophilin-3 (Pkp3), found in Mus musculus (Mouse).